The following is a 793-amino-acid chain: Phenylalanine--tRNA ligase beta subunit (793 aa).

The 110-residue stretch at 39 to 148 (AAPFKGVKAA…EGDFPGVDLH (110 aa)) folds into the tRNA-binding domain. In terms of domain architecture, B5 spans 401–476 (PPQATIILRK…RLYGYDRLPS (76 aa)). 4 residues coordinate Mg(2+): aspartate 454, aspartate 460, glutamate 463, and glutamate 464. The FDX-ACB domain occupies 699–792 (SKFPAIRRDI…LVTELGAIIR (94 aa)).

It belongs to the phenylalanyl-tRNA synthetase beta subunit family. Type 1 subfamily. Tetramer of two alpha and two beta subunits. It depends on Mg(2+) as a cofactor.

It is found in the cytoplasm. It catalyses the reaction tRNA(Phe) + L-phenylalanine + ATP = L-phenylalanyl-tRNA(Phe) + AMP + diphosphate + H(+). The chain is Phenylalanine--tRNA ligase beta subunit from Nitrosococcus oceani (strain ATCC 19707 / BCRC 17464 / JCM 30415 / NCIMB 11848 / C-107).